The following is a 542-amino-acid chain: Quinidine resistance protein 2 (542 aa).

Residues 1–67 lie on the Cytoplasmic side of the membrane; it reads MAGATSSIIR…SFKTVLIAQC (67 aa). Ser21 is modified (phosphoserine). The residue at position 38 (Thr38) is a Phosphothreonine. Ser40 carries the phosphoserine modification. The helical transmembrane segment at 68 to 88 threads the bilayer; it reads AFTGFFSTIAGAIYYPVLSVI. At 89 to 100 the chain is on the extracellular side; sequence ERKFDIDEELVN. The helical transmembrane segment at 101 to 121 threads the bilayer; the sequence is VTVVVYFVFQGLAPTFMGGFA. The Cytoplasmic portion of the chain corresponds to 122-127; it reads DSLGRR. The helical transmembrane segment at 128–148 threads the bilayer; sequence PVVLVAIVIYFGACIGLACAQ. Position 149 (Thr149) is a topological domain, extracellular. A helical transmembrane segment spans residues 150–170; sequence YAQIIVLRCLQAAGISPVIAI. Over 171-187 the chain is Cytoplasmic; the sequence is NSGIMGDVTTRAERGGY. Residues 188–208 form a helical membrane-spanning segment; it reads VGYVAGFQVLGSAFGALIGAG. At 209 to 216 the chain is on the extracellular side; it reads LSSRWGWR. The helical transmembrane segment at 217–237 threads the bilayer; the sequence is AIFWFLAIGSGICFLASFLIL. Residues 238 to 300 are Cytoplasmic-facing; it reads PETKRNISGN…APFKILKAYE (63 aa). The helical transmembrane segment at 301–321 threads the bilayer; sequence ICILMLVAGLQFAMYTTHLTA. Over 322-333 the chain is Extracellular; that stretch reads LSTALSKQYHLT. Residues 334 to 354 traverse the membrane as a helical segment; it reads VAKVGLCYLPSGICTLCSIVI. The Cytoplasmic segment spans residues 355-413; sequence AGRYLNWNYRRRLKYYQNWLGKKRSKLLEEHDNDLNLVQRIIENDPKYTFNIFKARLQP. The helical transmembrane segment at 414 to 434 threads the bilayer; that stretch reads AFVTLLLSSSGFCAYGWCITV. Residues 435-437 lie on the Extracellular side of the membrane; the sequence is KAP. Residues 438 to 458 traverse the membrane as a helical segment; it reads LAAVLCMSGFASLFSNCILTF. Over 459–472 the chain is Cytoplasmic; it reads STTLIVDLFPTKTS. The helical transmembrane segment at 473–493 threads the bilayer; the sequence is TATGCLNLFRCILSAVFIAAL. Residues 494–503 lie on the Extracellular side of the membrane; sequence SKMVEKMKFG. Residues 504-524 form a helical membrane-spanning segment; the sequence is GVFTFLGALTSSSSILLFILL. Residues 525–542 lie on the Cytoplasmic side of the membrane; it reads RKGKELAFKRKKQELGVN.

The protein belongs to the major facilitator superfamily. CAR1 family.

It is found in the cell membrane. Its function is as follows. Multidrug resistance transporter involved in resistance and adaptation to quinidine and to the herbicide barban (4-chloro-2-butynyl [3-chlorophenyl] carbamate). Implicated in potassium uptake. This is Quinidine resistance protein 2 (QDR2) from Saccharomyces cerevisiae (strain ATCC 204508 / S288c) (Baker's yeast).